The chain runs to 140 residues: MLPAAMKGLGLALLAVLLCSAPAHGLWCQDCTLTTNSSHCTPKQCQPSDTVCASVRITDPSSSRKDHSVNKMCASSCDFVKRHFFSDYLMGFINSGILKVDVDCYEKDLCNGVAGAGHSPWALAGGLLLSLGPALLWAGP.

The signal sequence occupies residues Met-1–Gly-25. Residues Leu-26–Gly-91 form the UPAR/Ly6 domain. 4 cysteine pairs are disulfide-bonded: Cys-28–Cys-52, Cys-31–Cys-40, Cys-45–Cys-73, and Cys-77–Cys-104. Residue Asn-36 is glycosylated (N-linked (GlcNAc...) asparagine). Gly-115 carries GPI-anchor amidated glycine lipidation. Residues Ala-116 to Pro-140 constitute a propeptide, removed in mature form.

In terms of assembly, interacts with CHRNA4 and CHRNA7.

The protein localises to the cell membrane. In terms of biological role, believed to act as a modulator of nicotinic acetylcholine receptors (nAChRs) activity. In vitro inhibits alpha-3:beta-4-containing nAChRs maximum response. May play a role in the intracellular trafficking of alpha-7-containing nAChRs and may inhibit their expression at the cell surface. Seems to inhibit alpha-7/CHRNA7 signaling in hippocampal neurons. This Macaca fascicularis (Crab-eating macaque) protein is Lymphocyte antigen 6H (LY6H).